Consider the following 604-residue polypeptide: Aspartate--tRNA(Asp/Asn) ligase (604 aa).

Position 177 (Glu177) interacts with L-aspartate. An aspartate region spans residues Gln201 to Lys204. Position 223 (Arg223) interacts with L-aspartate. ATP-binding positions include Arg223 to Glu225 and Gln232. Residue His457 participates in L-aspartate binding. ATP is bound at residue Glu495. Arg502 provides a ligand contact to L-aspartate. Gly547–Arg550 serves as a coordination point for ATP.

This sequence belongs to the class-II aminoacyl-tRNA synthetase family. Type 1 subfamily. In terms of assembly, homodimer.

Its subcellular location is the cytoplasm. It catalyses the reaction tRNA(Asx) + L-aspartate + ATP = L-aspartyl-tRNA(Asx) + AMP + diphosphate. Its function is as follows. Aspartyl-tRNA synthetase with relaxed tRNA specificity since it is able to aspartylate not only its cognate tRNA(Asp) but also tRNA(Asn). Reaction proceeds in two steps: L-aspartate is first activated by ATP to form Asp-AMP and then transferred to the acceptor end of tRNA(Asp/Asn). The polypeptide is Aspartate--tRNA(Asp/Asn) ligase (Synechococcus sp. (strain RCC307)).